Reading from the N-terminus, the 514-residue chain is Putative exoglucanase type C (514 aa).

The signal sequence occupies residues 1-17; sequence MYRIVATASALIAAARA. Positions 18–439 are catalytic; the sequence is QQVCSLNTET…RDVPNSKVSF (422 aa). Glu229 (nucleophile) is an active-site residue. The Proton donor role is filled by Glu234. Asn287 is a glycosylation site (N-linked (GlcNAc...) asparagine). The span at 408–424 shows a compositional bias: polar residues; sequence STKVGSQRGSCATTSGK. Disordered stretches follow at residues 408–433 and 448–485; these read STKV…RDVP and GSTY…QWGQ. The tract at residues 440–482 is linker; sequence SNIKFGPIGSTYKSDGTTPNPPASSSTTGSSTPTNPPAGSVDQ. The segment covering 462-479 has biased composition (low complexity); it reads ASSSTTGSSTPTNPPAGS. The CBM1 domain occupies 478–514; it reads GSVDQWGQCGGQNYSGPTTCKSPFTCKKINDFYSQCQ. Disulfide bonds link Cys486-Cys503 and Cys497-Cys513. An N-linked (GlcNAc...) asparagine glycan is attached at Asn490.

It belongs to the glycosyl hydrolase 7 (cellulase C) family.

It catalyses the reaction Hydrolysis of (1-&gt;4)-beta-D-glucosidic linkages in cellulose and cellotetraose, releasing cellobiose from the non-reducing ends of the chains.. The protein is Putative exoglucanase type C of Fusarium oxysporum (Fusarium vascular wilt).